Consider the following 117-residue polypeptide: Immunoglobulin heavy variable 1-69D (117 aa).

The N-terminal stretch at 1-19 is a signal peptide; the sequence is MDWTWRFLFVVAAATGVQS. Gln-20 is modified (pyrrolidone carboxylic acid). Positions 20 to 44 are framework-1; the sequence is QVQLVQSGAEVKKPGSSVKVSCKAS. The Ig-like domain maps to 20–117; the sequence is QVQLVQSGAE…EDTAVYYCAR (98 aa). The cysteines at positions 41 and 115 are disulfide-linked. The complementarity-determining-1 stretch occupies residues 45-52; it reads GGTFSSYA. A framework-2 region spans residues 53 to 69; it reads ISWVRQAPGQGLEWMGG. A complementarity-determining-2 region spans residues 70–77; sequence IIPIFGTA. The segment at 78–115 is framework-3; the sequence is NYAQKFQGRVTITADESTSTAYMELSSLRSEDTAVYYC. The segment at 116–117 is complementarity-determining-3; the sequence is AR.

Immunoglobulins are composed of two identical heavy chains and two identical light chains; disulfide-linked.

It localises to the secreted. The protein resides in the cell membrane. Its function is as follows. V region of the variable domain of immunoglobulin heavy chains that participates in the antigen recognition. Immunoglobulins, also known as antibodies, are membrane-bound or secreted glycoproteins produced by B lymphocytes. In the recognition phase of humoral immunity, the membrane-bound immunoglobulins serve as receptors which, upon binding of a specific antigen, trigger the clonal expansion and differentiation of B lymphocytes into immunoglobulins-secreting plasma cells. Secreted immunoglobulins mediate the effector phase of humoral immunity, which results in the elimination of bound antigens. The antigen binding site is formed by the variable domain of one heavy chain, together with that of its associated light chain. Thus, each immunoglobulin has two antigen binding sites with remarkable affinity for a particular antigen. The variable domains are assembled by a process called V-(D)-J rearrangement and can then be subjected to somatic hypermutations which, after exposure to antigen and selection, allow affinity maturation for a particular antigen. The chain is Immunoglobulin heavy variable 1-69D from Homo sapiens (Human).